Here is a 315-residue protein sequence, read N- to C-terminus: Protein translocase subunit SecF (315 aa).

Transmembrane regions (helical) follow at residues 12–32, 136–156, 166–186, 188–208, 247–267, and 271–291; these read AWIVSSLLVLISIFAMAISWA, ALFRSGVLALVISLLGIIIYL, VFAIIALLYDALITMGAFAIF, LVGGVEVDSLFLVALLTIIGF, SINTSLTTSLPLVAIFLFGGD, and FFALALIIGFASGVYSSIFMA.

It belongs to the SecD/SecF family. SecF subfamily. Forms a complex with SecD. Part of the essential Sec protein translocation apparatus which comprises SecA, SecYEG and auxiliary proteins SecDF. Other proteins may also be involved.

Its subcellular location is the cell inner membrane. In terms of biological role, part of the Sec protein translocase complex. Interacts with the SecYEG preprotein conducting channel. SecDF uses the proton motive force (PMF) to complete protein translocation after the ATP-dependent function of SecA. Its function is as follows. Probably participates in protein translocation into and across both the cytoplasmic and thylakoid membranes in cyanobacterial cells. The polypeptide is Protein translocase subunit SecF (Synechocystis sp. (strain ATCC 27184 / PCC 6803 / Kazusa)).